The following is a 1441-amino-acid chain: Pleiotropic drug resistance protein TUR2 (1441 aa).

The 273-residue stretch at 158–430 folds into the ABC transporter 1 domain; sequence LSALHLMPSG…FESMGFKCPE (273 aa). ATP is bound at residue 191 to 198; that stretch reads GPPGAGKT. The region spanning 508–721 is the ABC transmembrane type-2 1 domain; sequence ELLKACIDRE…AQNAIAVNEF (214 aa). 6 helical membrane-spanning segments follow: residues 526 to 546, 559 to 579, 614 to 634, 646 to 666, 671 to 691, and 756 to 776; these read FVYI…MTVF, ATIF…NGFA, IPIS…VIGF, LLLV…AAVG, VADT…GFII, and IGVG…ILFL. In terms of domain architecture, ABC transporter 2 spans 843-1095; the sequence is ITFDNVKYSV…HLIKYFESID (253 aa). Residue 888-895 coordinates ATP; that stretch reads GVSGRGKT. The 215-residue stretch at 1168 to 1382 folds into the ABC transmembrane type-2 2 domain; it reads MQCLACLWKQ…TLYGLVVSQF (215 aa). The next 7 helical transmembrane spans lie at 1187 to 1207, 1215 to 1235, 1275 to 1295, 1302 to 1322, 1332 to 1352, 1363 to 1383, and 1413 to 1433; these read YTAT…TIFW, TSLD…FIGI, VPHI…MIGF, FLWY…YGMM, IAAI…GFII, WYYW…SQFG, and VVGV…AFSI.

This sequence belongs to the ABC transporter superfamily. ABCG family. PDR (TC 3.A.1.205) subfamily. As to expression, ubiquitous.

It is found in the cell membrane. May be a general defense protein. Seems involved in turion (dormant buds) formation. Confers resistance to the diterpenoid antifungal agent sclareol. In Spirodela polyrhiza (Giant duckweed), this protein is Pleiotropic drug resistance protein TUR2 (TUR2).